The sequence spans 282 residues: Pantothenate synthetase (282 aa).

26 to 33 contributes to the ATP binding site; sequence MGNLHDGH. His-33 serves as the catalytic Proton donor. Gln-57 provides a ligand contact to (R)-pantoate. Gln-57 contributes to the beta-alanine binding site. 148–151 contributes to the ATP binding site; it reads GKKD. (R)-pantoate is bound at residue Gln-154. An ATP-binding site is contributed by 185–188; the sequence is LSSR.

This sequence belongs to the pantothenate synthetase family. In terms of assembly, homodimer.

Its subcellular location is the cytoplasm. It carries out the reaction (R)-pantoate + beta-alanine + ATP = (R)-pantothenate + AMP + diphosphate + H(+). It functions in the pathway cofactor biosynthesis; (R)-pantothenate biosynthesis; (R)-pantothenate from (R)-pantoate and beta-alanine: step 1/1. Its function is as follows. Catalyzes the condensation of pantoate with beta-alanine in an ATP-dependent reaction via a pantoyl-adenylate intermediate. The protein is Pantothenate synthetase of Polaromonas sp. (strain JS666 / ATCC BAA-500).